The sequence spans 554 residues: Inactive sesquithujene synthase B (554 aa).

Mg(2+) contacts are provided by Asp308 and Asp312. Positions 308, 312, 449, and 452 each coordinate substrate. The short motif at 308 to 312 (DDMFD) is the DDXXD motif element. Asn452, Ser456, and Glu460 together coordinate Mg(2+).

Belongs to the terpene synthase family. Monomer. Requires Mg(2+) as cofactor. Mn(2+) is required as a cofactor.

The protein localises to the cytoplasm. It functions in the pathway secondary metabolite biosynthesis; terpenoid biosynthesis. Non-functional sesquiterpene synthase having less than 1% of the activity found in TPS5A. This Zea mays (Maize) protein is Inactive sesquithujene synthase B.